A 320-amino-acid polypeptide reads, in one-letter code: MAGKLQDGVAIAKIKETINLFCEYSFGDLVNNRREIVGRVHDARKNAALAWPDLIMNCFLHSASHYGVVKFLLDIALSTRFGDFTLLGVSSQNYPFYDLHVVMTKAFCNLDFAKDEYLMINDSFSSMMSAFLDEEGVHSAMSMELGIHDIEDRFVLRTKRLFYIIHEYHMSLDEIEPWLEKLPDASGGTLLNQKSKEQMRVIFSNAKVRIANSINLYVTTHTNSYNEYVREVAEYVADLWNIQTTTNTQGHENELAAEDFGVLASSSQMNGTKSELGDSVIKSDGNEVKLEPAMFTRNDDEEELAGSEFTSLLSDDGRMG.

Residues 297 to 320 (RNDDEEELAGSEFTSLLSDDGRMG) form a disordered region.

The protein belongs to the phytoreovirus minor outer capsid protein P9 family.

It is found in the virion. It localises to the host cytoplasm. Functionally, minor outer capsid protein. This chain is Minor outer capsid protein P9, found in Rice gall dwarf virus (RGDV).